A 250-amino-acid polypeptide reads, in one-letter code: tRNA (guanine-N(1)-)-methyltransferase (250 aa).

S-adenosyl-L-methionine is bound by residues glycine 116 and 136–141; that span reads IGDYVL.

It belongs to the RNA methyltransferase TrmD family. As to quaternary structure, homodimer.

The protein localises to the cytoplasm. It catalyses the reaction guanosine(37) in tRNA + S-adenosyl-L-methionine = N(1)-methylguanosine(37) in tRNA + S-adenosyl-L-homocysteine + H(+). In terms of biological role, specifically methylates guanosine-37 in various tRNAs. The protein is tRNA (guanine-N(1)-)-methyltransferase of Pseudomonas putida (strain ATCC 47054 / DSM 6125 / CFBP 8728 / NCIMB 11950 / KT2440).